A 124-amino-acid polypeptide reads, in one-letter code: Large ribosomal subunit protein bL12 (124 aa).

It belongs to the bacterial ribosomal protein bL12 family. In terms of assembly, homodimer. Part of the ribosomal stalk of the 50S ribosomal subunit. Forms a multimeric L10(L12)X complex, where L10 forms an elongated spine to which 2 to 4 L12 dimers bind in a sequential fashion. Binds GTP-bound translation factors.

In terms of biological role, forms part of the ribosomal stalk which helps the ribosome interact with GTP-bound translation factors. Is thus essential for accurate translation. The polypeptide is Large ribosomal subunit protein bL12 (Vesicomyosocius okutanii subsp. Calyptogena okutanii (strain HA)).